Consider the following 329-residue polypeptide: MTDLTATPAPAEPAASAYDPTAKQKAQAKTARIPIKIVPIEKLKKPEWIRVKAATGSSRFNEIKTILREHNLHTVCEEASCPNIGECFGKGTATFMIMGDKCTRRCPFCDVGHGRPDPLDADEPKNLARTIAALKLKYVVITSVDRDDLRDGGAGHFVECIREVREQSPATRIEILTPDFRGRLDRALAILNAAPPDVMNHNLETVPRLYKEARPGSDYAHSLKLLKDFKALHPDVATKSGLMVGLGETTDEILQVMRDLRAHDVDMLTIGQYLQPSEHHLPVREYVHPDTFKMYEEEAYKMGFTHAAVGAMVRSSYHADLQAHGAGVV.

Positions 1 to 23 (MTDLTATPAPAEPAASAYDPTAK) are disordered. [4Fe-4S] cluster contacts are provided by C76, C81, C87, C102, C106, C109, and S316. A Radical SAM core domain is found at 87-305 (CFGKGTATFM…EEEAYKMGFT (219 aa)).

It belongs to the radical SAM superfamily. Lipoyl synthase family. [4Fe-4S] cluster is required as a cofactor.

It localises to the cytoplasm. The enzyme catalyses [[Fe-S] cluster scaffold protein carrying a second [4Fe-4S](2+) cluster] + N(6)-octanoyl-L-lysyl-[protein] + 2 oxidized [2Fe-2S]-[ferredoxin] + 2 S-adenosyl-L-methionine + 4 H(+) = [[Fe-S] cluster scaffold protein] + N(6)-[(R)-dihydrolipoyl]-L-lysyl-[protein] + 4 Fe(3+) + 2 hydrogen sulfide + 2 5'-deoxyadenosine + 2 L-methionine + 2 reduced [2Fe-2S]-[ferredoxin]. It functions in the pathway protein modification; protein lipoylation via endogenous pathway; protein N(6)-(lipoyl)lysine from octanoyl-[acyl-carrier-protein]: step 2/2. Its function is as follows. Catalyzes the radical-mediated insertion of two sulfur atoms into the C-6 and C-8 positions of the octanoyl moiety bound to the lipoyl domains of lipoate-dependent enzymes, thereby converting the octanoylated domains into lipoylated derivatives. The polypeptide is Lipoyl synthase (Burkholderia pseudomallei (strain 1106a)).